The following is a 454-amino-acid chain: Aspartate aminotransferase P2, mitochondrial (454 aa).

Residues 1–49 constitute a mitochondrion transit peptide; it reads SSLLSIPSLSLQYNDKLKVGGNSLRFSKEQSNTFSNAKSSCRISMVAAV. Residues glycine 86, tryptophan 182, and asparagine 235 each contribute to the L-aspartate site. Lysine 299 carries the N6-(pyridoxal phosphate)lysine modification. Position 428 (arginine 428) interacts with L-aspartate.

It belongs to the class-I pyridoxal-phosphate-dependent aminotransferase family. Homodimer. Requires pyridoxal 5'-phosphate as cofactor.

It localises to the mitochondrion matrix. It carries out the reaction L-aspartate + 2-oxoglutarate = oxaloacetate + L-glutamate. Functionally, important for the metabolism of amino acids and Krebs-cycle related organic acids. In plants, it is involved in nitrogen metabolism and in aspects of carbon and energy metabolism. This is Aspartate aminotransferase P2, mitochondrial from Lupinus angustifolius (Narrow-leaved blue lupine).